Reading from the N-terminus, the 542-residue chain is Chaperonin GroEL 2 (542 aa).

ATP-binding positions include 29–32, 86–90, Gly413, 477–479, and Asp493; these read TLGP, DGTTT, and NAA.

It belongs to the chaperonin (HSP60) family. Forms a cylinder of 14 subunits composed of two heptameric rings stacked back-to-back. Interacts with the co-chaperonin GroES.

The protein resides in the cytoplasm. It carries out the reaction ATP + H2O + a folded polypeptide = ADP + phosphate + an unfolded polypeptide.. Together with its co-chaperonin GroES, plays an essential role in assisting protein folding. The GroEL-GroES system forms a nano-cage that allows encapsulation of the non-native substrate proteins and provides a physical environment optimized to promote and accelerate protein folding. The chain is Chaperonin GroEL 2 from Kineococcus radiotolerans (strain ATCC BAA-149 / DSM 14245 / SRS30216).